Here is a 457-residue protein sequence, read N- to C-terminus: tRNA-2-methylthio-N(6)-dimethylallyladenosine synthase (457 aa).

The region spanning 3–120 (KKVYVKTFGC…LPQMIDARRA (118 aa)) is the MTTase N-terminal domain. The [4Fe-4S] cluster site is built by Cys12, Cys49, Cys83, Cys157, Cys161, and Cys164. A Radical SAM core domain is found at 143-377 (RVEGPSAFVS…QATIEENVAR (235 aa)). The region spanning 380–447 (QSMVGKVERI…PHSLRGELVI (68 aa)) is the TRAM domain.

This sequence belongs to the methylthiotransferase family. MiaB subfamily. Monomer. Requires [4Fe-4S] cluster as cofactor.

Its subcellular location is the cytoplasm. The catalysed reaction is N(6)-dimethylallyladenosine(37) in tRNA + (sulfur carrier)-SH + AH2 + 2 S-adenosyl-L-methionine = 2-methylsulfanyl-N(6)-dimethylallyladenosine(37) in tRNA + (sulfur carrier)-H + 5'-deoxyadenosine + L-methionine + A + S-adenosyl-L-homocysteine + 2 H(+). Its function is as follows. Catalyzes the methylthiolation of N6-(dimethylallyl)adenosine (i(6)A), leading to the formation of 2-methylthio-N6-(dimethylallyl)adenosine (ms(2)i(6)A) at position 37 in tRNAs that read codons beginning with uridine. This Burkholderia cenocepacia (strain ATCC BAA-245 / DSM 16553 / LMG 16656 / NCTC 13227 / J2315 / CF5610) (Burkholderia cepacia (strain J2315)) protein is tRNA-2-methylthio-N(6)-dimethylallyladenosine synthase.